Reading from the N-terminus, the 620-residue chain is Chaperone protein HscA homolog (620 aa).

This sequence belongs to the heat shock protein 70 family.

Functionally, chaperone involved in the maturation of iron-sulfur cluster-containing proteins. Has a low intrinsic ATPase activity which is markedly stimulated by HscB. This Neisseria meningitidis serogroup A / serotype 4A (strain DSM 15465 / Z2491) protein is Chaperone protein HscA homolog.